The sequence spans 234 residues: MEFSPPLQRATLIQRYKRFLADVITPDGRELTLHCPNTGAMTGCATRGDTVWYSTSDNTKRKYPHTWELTQSQSGAFICVNTLWANRLTKEAILNESISELSGYSSLKSEVKYGAERSRIDFMLQADSRPDCYIEVKSVTLAENEQGYFPDAVTERGQKHLRELMNVAAEGQRAVIFFAVLHSAITRFSPARHIDEKYAQLLSEAQQRGVEILAYKAEISAEGMALKKSLSVTL.

The H-T-H motif DNA-binding region spans 201–220 (LLSEAQQRGVEILAYKAEIS).

The protein belongs to the SfsA family.

Its function is as follows. Binds to DNA non-specifically. Could be a regulatory factor involved in maltose metabolism. The polypeptide is Sugar fermentation stimulation protein A (Shigella sonnei (strain Ss046)).